Reading from the N-terminus, the 377-residue chain is Chaperone protein DnaJ (377 aa).

A J domain is found at 5 to 70 (DYYQVLGVSR…KKRSAYDQLG (66 aa)). The CR-type zinc finger occupies 138-216 (GVTKIISFKT…CYGEGRYINT (79 aa)). The Zn(2+) site is built by Cys-151, Cys-154, Cys-168, Cys-171, Cys-190, Cys-193, Cys-204, and Cys-207. CXXCXGXG motif repeat units follow at residues 151-158 (CEACTGKG), 168-175 (CPTCRGSG), 190-197 (CQTCRGAG), and 204-211 (CTKCYGEG).

Belongs to the DnaJ family. In terms of assembly, homodimer. Zn(2+) is required as a cofactor.

The protein localises to the cytoplasm. Functionally, participates actively in the response to hyperosmotic and heat shock by preventing the aggregation of stress-denatured proteins and by disaggregating proteins, also in an autonomous, DnaK-independent fashion. Unfolded proteins bind initially to DnaJ; upon interaction with the DnaJ-bound protein, DnaK hydrolyzes its bound ATP, resulting in the formation of a stable complex. GrpE releases ADP from DnaK; ATP binding to DnaK triggers the release of the substrate protein, thus completing the reaction cycle. Several rounds of ATP-dependent interactions between DnaJ, DnaK and GrpE are required for fully efficient folding. Also involved, together with DnaK and GrpE, in the DNA replication of plasmids through activation of initiation proteins. The sequence is that of Chaperone protein DnaJ from Orientia tsutsugamushi (strain Ikeda) (Rickettsia tsutsugamushi).